A 953-amino-acid chain; its full sequence is UPF0746 protein DDB_G0281301 (953 aa).

Over residues 1 to 10 the composition is skewed to basic and acidic residues; it reads MVNNKRKEIE. Residues 1–23 are disordered; it reads MVNNKRKEIENQENDNNDDNDGL. The span at 11–21 shows a compositional bias: acidic residues; sequence NQENDNNDDND. Positions 35–69 constitute an SAP domain; sequence YDSIRSKELQTIAKSLGLPIIGKKQEIYKRIEGYF.

It belongs to the UPF0746 family.

This is UPF0746 protein DDB_G0281301 from Dictyostelium discoideum (Social amoeba).